The following is a 278-amino-acid chain: ATP synthase subunit a (278 aa).

6 helical membrane-spanning segments follow: residues 41 to 61 (FLNI…LLFF), 108 to 128 (LTIF…VDFV), 149 to 168 (INIT…YFGI), 180 to 200 (FFFQ…LELI), 222 to 242 (LIFI…LSVP), and 244 to 264 (AIFH…LTII).

It belongs to the ATPase A chain family. As to quaternary structure, F-type ATPases have 2 components, CF(1) - the catalytic core - and CF(0) - the membrane proton channel. CF(1) has five subunits: alpha(3), beta(3), gamma(1), delta(1), epsilon(1). CF(0) has three main subunits: a(1), b(2) and c(9-12). The alpha and beta chains form an alternating ring which encloses part of the gamma chain. CF(1) is attached to CF(0) by a central stalk formed by the gamma and epsilon chains, while a peripheral stalk is formed by the delta and b chains.

The protein resides in the cell membrane. In terms of biological role, key component of the proton channel; it plays a direct role in the translocation of protons across the membrane. In Wigglesworthia glossinidia brevipalpis, this protein is ATP synthase subunit a.